Reading from the N-terminus, the 84-residue chain is Small ribosomal subunit protein bS20 (84 aa).

The protein belongs to the bacterial ribosomal protein bS20 family.

Binds directly to 16S ribosomal RNA. The sequence is that of Small ribosomal subunit protein bS20 from Bacteroides thetaiotaomicron (strain ATCC 29148 / DSM 2079 / JCM 5827 / CCUG 10774 / NCTC 10582 / VPI-5482 / E50).